The sequence spans 453 residues: Validoxylamine A glucosyltransferase (453 aa).

It belongs to the glycosyltransferase 2 family. It depends on Mn(2+) as a cofactor.

It carries out the reaction validoxylamine A + UDP-alpha-D-glucose = validamycin A + UDP + H(+). Involved in the biosynthesis of the antifungal agent validamycin A. Catalyzes the final attachment of glucose from UDP-alpha-D-glucose to validoxylamine A to yield validamycin A. The polypeptide is Validoxylamine A glucosyltransferase (Streptomyces hygroscopicus subsp. limoneus).